A 237-amino-acid polypeptide reads, in one-letter code: MVLQYPQNKILVLSDHPHNFSKTQFLQDLFHCSSTGISIVKDQTWENRYYKVHFDLYIDSCKDIPVWVEEFITPECEPLRNVMAGIILITDIRQTKPQELLHQFMIAAHRNTFVVLVNVNEEVEQDEIDELNEIWSNAFTNVIEFVNWKRSKPTVNHNDYGEKLGLDRIQEIIDTHDWLKCEVLPATKIREEIPNEMPLEQIIRNLQSARLKYKSIENSSEADAFANEMADELSRYL.

This sequence belongs to the IRC6 family.

Involved in gross chromosomal rearrangements (GCRs) and telomere healing. The protein is Increased recombination centers protein 6 (IRC6) of Saccharomyces cerevisiae (strain YJM789) (Baker's yeast).